We begin with the raw amino-acid sequence, 137 residues long: Small ribosomal subunit protein uS19 (137 aa).

The interval 115-137 (RNRVSHGSAGVGATRSSKFVPLK) is disordered.

This sequence belongs to the universal ribosomal protein uS19 family.

Its function is as follows. Protein S19 forms a complex with S13 that binds strongly to the 16S ribosomal RNA. In Methanococcoides burtonii (strain DSM 6242 / NBRC 107633 / OCM 468 / ACE-M), this protein is Small ribosomal subunit protein uS19.